We begin with the raw amino-acid sequence, 72 residues long: Conotoxin LvVIA (72 aa).

Residues 1 to 17 (VLIIAVLFLTASELVTA) form the signal peptide. The propeptide occupies 18-41 (DYTRDKWQYRAASLRDAMRNFRDT). Disulfide bonds link cysteine 44-cysteine 58, cysteine 51-cysteine 63, and cysteine 57-cysteine 70.

It belongs to the conotoxin O1 superfamily. As to expression, expressed by the venom duct.

The protein localises to the secreted. This Conus lividus (Livid cone) protein is Conotoxin LvVIA.